A 287-amino-acid chain; its full sequence is MTRDQKFALVTGCGKGGIGEALILEYTRRGIYAIATVLPTENSDHLTAAGITWFPLDVTDEQSVVDLKKSIASVTDGYLDFLVNNAGICYTMTAIDTDVSAVKRMFDVNVFGPMRMVHHFHDMLIQATGTIVNIGSIGGVVPYMYGASYNASKAALHHYSNTLRLEMSPFNVKVLTVISGEVGTNILKNDVHRNLPEGSYYSPLAVEFRDHVQRTPKTTSRFEYAENVVAQSLKSSPAAWFWTGSATGIIRFLDMFAWRTIWDFFFYREFNLGKVKDAYLANLKKDM.

The NADP(+) site is built by Val10, Thr36, Asp57, Asn85, Tyr149, Lys153, Val182, and Thr184. Tyr149 (proton acceptor) is an active-site residue. The active-site Lowers pKa of active site Tyr is Lys153.

Belongs to the short-chain dehydrogenases/reductases (SDR) family.

Its pathway is secondary metabolite biosynthesis. Short-chain dehydrogenase; part of the gene cluster that mediates the biosynthesis of virensols and trichoxide, fungal natural products that contain or are derived from a salicylaldehyde core. The pathway begins with the synthesis of the reduced chain in virensol C by the highly reducing polyketide synthase virA via condensation of one acetate and 8 malonate units. VirA has interesting programming rules since the first 2 ketides are fully reduced, the 3 following ketides undergo beta-dehydration, and the last 3 ketides are only reduced to beta-hydroxys to yield the trihydroxy portion. The production of aldehyde virensol C by virA alone is surprising, since virA does not contain a reductase (R) domain that is typically associated with reductive product release in HRPKS. The cupin-domain enzyme virC is involved in enhancing virA product turnover. The short-chain dehydrogenase virB then oxidizes the C-7 alcohol of virensol C to a ketone, yielding virensol D. Virensol D is further transformed to salicylaldehyde 5-deoxyaurocitrin by the short-chain dehydrogenase virD. VirD catalyzes the dehydrogenation of C-3 to form the beta-ketone aldehyde, which is followed by the generation of the nucleophilic C-2 that is required for the intramolecular aldol condensation between C-2 and C-7, itself followed by dehydration and aromatization which leads to salicylaldehyde 5-deoxyaurocitrin. While the dehydrogenation of virensol D is definitely catalyzed by virD, the aldol condensation and dehydration may be uncatalyzed or assisted by virD. The short chain dehydrogenase virG then converts salicylaldehyde 5-deoxyaurocitrin into virensol B which is further hydroxylated by the cytochrome P450 monooxygenase virE to yield the hydroquinone virensol A. VirI then may oxidize virensol A to form the quinone, while virH performs the epoxidation. Finally, the two remaining short-chain dehydrogenases, virK and virL, are probably responsible for reducing the ketones to the corresponding alcohols to furnish the epoxycyclohexanol structure in trichoxide. In Hypocrea virens (strain Gv29-8 / FGSC 10586) (Gliocladium virens), this protein is Short-chain dehydrogenase virD.